The following is a 1188-amino-acid chain: uncharacterized protein (1188 aa).

The next 3 helical transmembrane spans lie at phenylalanine 73–methionine 93, isoleucine 878–isoleucine 898, and valine 1089–isoleucine 1109.

Its subcellular location is the membrane. This is an uncharacterized protein from Saccharomyces cerevisiae (strain ATCC 204508 / S288c) (Baker's yeast).